Here is an 84-residue protein sequence, read N- to C-terminus: Mu-conotoxin-like Cal 12.2d (84 aa).

Positions 1-19 are cleaved as a signal peptide; that stretch reads MKLTCVLVVLLLVLPFGDL. Residues 20-42 constitute a propeptide that is removed on maturation; it reads ITTSNTEDNKRGATPWQNSLKAR. Trp72 bears the 6'-bromotryptophan mark. Position 77 is a 4-hydroxyproline (Pro77). Trp81 carries the 6'-bromotryptophan modification.

The protein belongs to the conotoxin O1 superfamily. Contains 4 disulfide bonds. In terms of tissue distribution, expressed by the venom duct.

Its subcellular location is the secreted. Its function is as follows. Mu-conotoxins block voltage-gated sodium channels. This toxin reversibly blocks voltage-gated sodium channel in cephalopods, with no alteration in the voltage dependence of sodium conductance or on the kinetics of inactivation. The chain is Mu-conotoxin-like Cal 12.2d from Californiconus californicus (California cone).